A 289-amino-acid polypeptide reads, in one-letter code: Polyisoprenoid diphosphate/phosphate phosphohydrolase PLPP6 (289 aa).

Positions 1 to 81 (MQSPRRNAEG…SSQALPPQLP (81 aa)) are disordered. The Cytoplasmic portion of the chain corresponds to 1-126 (MQSPRRNAEG…ESSSWGSMRP (126 aa)). Residues serine 23, serine 30, and serine 64 each carry the phosphoserine modification. A helical transmembrane segment spans residues 127–147 (LMKLLEISGHGIPWLLGTLYC). Over 148-158 (LSRSDSWAGRE) the chain is Lumenal. Residues 159–179 (VLMNLLFALLLDLLLVSLIKG) traverse the membrane as a helical segment. Residues 178–186 (KGLVRRRRP) form a phosphatase sequence motif I region. Topologically, residues 180 to 222 (LVRRRRPAHNQMDMFFTISVDKYSFPSGHTTRAALVSRFILNH) are cytoplasmic. Positions 205 to 208 (PSGH) are phosphatase sequence motif II. The active-site Proton donors is histidine 208. Residues 223-243 (LVLAIPLRVLVVLWAFILGLS) traverse the membrane as a helical segment. The interval 243–254 (SRVMLGRHNVTD) is phosphatase sequence motif III. Topologically, residues 244 to 254 (RVMLGRHNVTD) are lumenal. Histidine 250 (nucleophile) is an active-site residue. The chain crosses the membrane as a helical span at residues 255–275 (VAFGFFLGYMQYSIVDYCWLS). Over 276–289 (PRTAPVLFVLWNQP) the chain is Cytoplasmic.

The protein belongs to the PA-phosphatase related phosphoesterase family. In terms of processing, phosphorylation by PKC activates the phosphatase activity towards presqualene diphosphate.

Its subcellular location is the endoplasmic reticulum membrane. The protein resides in the nucleus envelope. It localises to the nucleus inner membrane. It carries out the reaction presqualene diphosphate + H2O = presqualene phosphate + phosphate + H(+). The catalysed reaction is presqualene phosphate + H2O = presqualene alcohol + phosphate. The enzyme catalyses (2E,6E)-farnesyl diphosphate + H2O = (2E,6E)-farnesyl phosphate + phosphate + H(+). It catalyses the reaction (2E,6E)-farnesyl phosphate + H2O = (2E,6E)-farnesol + phosphate. It carries out the reaction (2E,6E,10E)-geranylgeranyl diphosphate + H2O = (2E,6E,10E)-geranylgeranyl phosphate + phosphate + H(+). The catalysed reaction is (2E,6E,10E)-geranylgeranyl phosphate + H2O = (2E,6E,10E)-geranylgeraniol + phosphate. The enzyme catalyses (2E)-geranyl diphosphate + H2O = (2E)-geranyl phosphate + phosphate + H(+). It catalyses the reaction (2E)-geranyl phosphate + H2O = (2E)-geraniol + phosphate. It carries out the reaction 1,2-dihexadecanoyl-sn-glycero-3-phosphate + H2O = 1,2-dihexadecanoyl-sn-glycerol + phosphate. Functionally, magnesium-independent polyisoprenoid diphosphatase that catalyzes the sequential dephosphorylation of presqualene, farnesyl, geranyl and geranylgeranyl diphosphates. Functions in the innate immune response through the dephosphorylation of presqualene diphosphate which acts as a potent inhibitor of the signaling pathways contributing to polymorphonuclear neutrophils activation. May regulate the biosynthesis of cholesterol and related sterols by dephosphorylating presqualene and farnesyl diphosphate, two key intermediates in this biosynthetic pathway. May also play a role in protein prenylation by acting on farnesyl diphosphate and its derivative geranylgeranyl diphosphate, two precursors for the addition of isoprenoid anchors to membrane proteins. Has a lower activity towards phosphatidic acid (PA), but through phosphatidic acid dephosphorylation may participate in the biosynthesis of phospholipids and triacylglycerols. May also act on ceramide-1-P, lysophosphatidic acid (LPA) and sphing-4-enine 1-phosphate/sphingosine-1-phosphate. The polypeptide is Polyisoprenoid diphosphate/phosphate phosphohydrolase PLPP6 (Bos taurus (Bovine)).